We begin with the raw amino-acid sequence, 704 residues long: Capsule polysaccharide modification protein LipA (704 aa).

It localises to the cell inner membrane. Involved in the phospholipid modification of the capsular polysaccharide, a strong requirement for its translocation to the cell surface. This is Capsule polysaccharide modification protein LipA (lipA) from Neisseria meningitidis serogroup A / serotype 4A (strain DSM 15465 / Z2491).